We begin with the raw amino-acid sequence, 78 residues long: D-alanyl carrier protein (78 aa).

Positions 1 to 78 (MEFKEQVLDL…KIVEALEELR (78 aa)) constitute a Carrier domain. At S36 the chain carries O-(pantetheine 4'-phosphoryl)serine.

This sequence belongs to the DltC family. Post-translationally, 4'-phosphopantetheine is transferred from CoA to a specific serine of apo-DCP.

The protein resides in the cytoplasm. The protein operates within cell wall biogenesis; lipoteichoic acid biosynthesis. Carrier protein involved in the D-alanylation of lipoteichoic acid (LTA). The loading of thioester-linked D-alanine onto DltC is catalyzed by D-alanine--D-alanyl carrier protein ligase DltA. The DltC-carried D-alanyl group is further transferred to cell membrane phosphatidylglycerol (PG) by forming an ester bond, probably catalyzed by DltD. D-alanylation of LTA plays an important role in modulating the properties of the cell wall in Gram-positive bacteria, influencing the net charge of the cell wall. The sequence is that of D-alanyl carrier protein from Staphylococcus haemolyticus (strain JCSC1435).